A 141-amino-acid polypeptide reads, in one-letter code: Hemoglobin subunit alpha (141 aa).

A Globin domain is found at 1 to 141 (VLSATDKANV…VATVLTSKYR (141 aa)). Serine 3 is modified (phosphoserine). N6-succinyllysine occurs at positions 7 and 11. Lysine 16 is subject to N6-acetyllysine; alternate. Lysine 16 carries the post-translational modification N6-succinyllysine; alternate. Tyrosine 24 bears the Phosphotyrosine mark. An N6-succinyllysine modification is found at lysine 40. Histidine 58 provides a ligand contact to O2. Residue histidine 87 coordinates heme b. Phosphoserine is present on serine 102. Phosphothreonine is present on threonine 108. At serine 124 the chain carries Phosphoserine. Phosphothreonine occurs at positions 134 and 137. Position 138 is a phosphoserine (serine 138).

The protein belongs to the globin family. In terms of assembly, heterotetramer of two alpha chains and two beta chains. Red blood cells.

Its function is as follows. Involved in oxygen transport from the lung to the various peripheral tissues. In terms of biological role, hemopressin acts as an antagonist peptide of the cannabinoid receptor CNR1. Hemopressin-binding efficiently blocks cannabinoid receptor CNR1 and subsequent signaling. This Erinaceus europaeus (Western European hedgehog) protein is Hemoglobin subunit alpha (HBA).